Consider the following 244-residue polypeptide: Large ribosomal subunit protein uL2 (244 aa).

Composition is skewed to basic residues over residues 1–12 and 234–244; these read MGKRPLVRRRGR and KTGRARIKERK. 2 disordered regions span residues 1–30 and 203–244; these read MGKR…TKAN and HGGG…KERK.

It belongs to the universal ribosomal protein uL2 family. Part of the 50S ribosomal subunit. Forms a bridge to the 30S subunit in the 70S ribosome.

Its function is as follows. One of the primary rRNA binding proteins. Required for association of the 30S and 50S subunits to form the 70S ribosome, for tRNA binding and peptide bond formation. It has been suggested to have peptidyltransferase activity; this is somewhat controversial. Makes several contacts with the 16S rRNA in the 70S ribosome. This chain is Large ribosomal subunit protein uL2, found in Nitrosopumilus maritimus (strain SCM1).